Consider the following 166-residue polypeptide: Co-chaperone protein HscB homolog (166 aa).

The J domain maps to 3 to 75 (QYFTLFRIEP…IDRAAYLLKT (73 aa)).

The protein belongs to the HscB family. As to quaternary structure, interacts with HscA and stimulates its ATPase activity.

In terms of biological role, co-chaperone involved in the maturation of iron-sulfur cluster-containing proteins. Seems to help targeting proteins to be folded toward HscA. The polypeptide is Co-chaperone protein HscB homolog (Neisseria meningitidis serogroup A / serotype 4A (strain DSM 15465 / Z2491)).